Here is a 63-residue protein sequence, read N- to C-terminus: Chromatin protein Cren7 (63 aa).

The protein belongs to the Cren7 family. As to quaternary structure, monomer. Methylated at multiple sites, to varying extents.

The protein localises to the chromosome. It localises to the cytoplasm. Its function is as follows. A chromatin protein, binds double-stranded DNA without sequence specificity. Constrains negative DNA supercoils. The polypeptide is Chromatin protein Cren7 (Pyrobaculum calidifontis (strain DSM 21063 / JCM 11548 / VA1)).